Reading from the N-terminus, the 89-residue chain is Large ribosomal subunit protein bL27 (89 aa).

Residues 1-20 (MAHKKAGGSSRNGRDSIGRR) are disordered.

Belongs to the bacterial ribosomal protein bL27 family.

In Ruegeria pomeroyi (strain ATCC 700808 / DSM 15171 / DSS-3) (Silicibacter pomeroyi), this protein is Large ribosomal subunit protein bL27.